We begin with the raw amino-acid sequence, 380 residues long: Type 4 apparatus protein DotM (380 aa).

A run of 2 helical transmembrane segments spans residues 18-38 and 99-119; these read MAPV…WALA and YPVI…NVTL.

The T4BSS is a complex nanomachine composed of several subcomplexes. This subunit is part of the Type IV Coupling Complex (T4CC), a subcomplex composed of the DotLMNYZ core and the IcmSW-LvgA adapter subunits, linked by the C-terminal tail of DotL. Six DotLMNYZ hetero-pentameric units may assemble into a hexameric nanomachine, forming an inner membrane channel for effectors to pass through. Interacts directly with DotL.

The protein localises to the cell inner membrane. Component of the Dot/Icm type IVB secretion system (T4BSS), which is used to inject bacterial effector proteins into eukaryotic host cells. Part of a subcomplex which recruits effector proteins and delivers them to the core transmembrane subcomplex. Forms the interacting surface for recruitment of acidic Glu-rich motif-containing effectors. In Legionella pneumophila subsp. pneumophila (strain Philadelphia 1 / ATCC 33152 / DSM 7513), this protein is Type 4 apparatus protein DotM.